The sequence spans 169 residues: Sec-independent protein translocase protein TatB (169 aa).

The chain crosses the membrane as a helical span at residues 1–21 (MFDIGFLELAVIAVIGLIVIG). The interval 98-169 (EAEEAKLQTP…TTKTEPANDR (72 aa)) is disordered. Residues 134-143 (PPEEPSKVEA) are compositionally biased toward basic and acidic residues. The segment covering 146 to 169 (SAETPQANNQDQQPTTKTEPANDR) has biased composition (polar residues).

It belongs to the TatB family. In terms of assembly, the Tat system comprises two distinct complexes: a TatABC complex, containing multiple copies of TatA, TatB and TatC subunits, and a separate TatA complex, containing only TatA subunits. Substrates initially bind to the TatABC complex, which probably triggers association of the separate TatA complex to form the active translocon.

The protein resides in the cell inner membrane. Part of the twin-arginine translocation (Tat) system that transports large folded proteins containing a characteristic twin-arginine motif in their signal peptide across membranes. Together with TatC, TatB is part of a receptor directly interacting with Tat signal peptides. TatB may form an oligomeric binding site that transiently accommodates folded Tat precursor proteins before their translocation. In Saccharophagus degradans (strain 2-40 / ATCC 43961 / DSM 17024), this protein is Sec-independent protein translocase protein TatB.